The following is a 986-amino-acid chain: Bifunctional glutamine synthetase adenylyltransferase/adenylyl-removing enzyme (986 aa).

The tract at residues 1–482 (MVTTVISNVK…RYGRLFAGEE (482 aa)) is adenylyl removase. Residues 486–986 (SRFGSLVFTG…RAAYEAVVKG (501 aa)) form an adenylyl transferase region.

This sequence belongs to the GlnE family. Requires Mg(2+) as cofactor.

The enzyme catalyses [glutamine synthetase]-O(4)-(5'-adenylyl)-L-tyrosine + phosphate = [glutamine synthetase]-L-tyrosine + ADP. It carries out the reaction [glutamine synthetase]-L-tyrosine + ATP = [glutamine synthetase]-O(4)-(5'-adenylyl)-L-tyrosine + diphosphate. Its function is as follows. Involved in the regulation of glutamine synthetase GlnA, a key enzyme in the process to assimilate ammonia. When cellular nitrogen levels are high, the C-terminal adenylyl transferase (AT) inactivates GlnA by covalent transfer of an adenylyl group from ATP to specific tyrosine residue of GlnA, thus reducing its activity. Conversely, when nitrogen levels are low, the N-terminal adenylyl removase (AR) activates GlnA by removing the adenylyl group by phosphorolysis, increasing its activity. The regulatory region of GlnE binds the signal transduction protein PII (GlnB) which indicates the nitrogen status of the cell. The polypeptide is Bifunctional glutamine synthetase adenylyltransferase/adenylyl-removing enzyme (Caulobacter vibrioides (strain ATCC 19089 / CIP 103742 / CB 15) (Caulobacter crescentus)).